Here is a 150-residue protein sequence, read N- to C-terminus: Large ribosomal subunit protein bL9 (150 aa).

Belongs to the bacterial ribosomal protein bL9 family.

Binds to the 23S rRNA. In Corynebacterium glutamicum (strain ATCC 13032 / DSM 20300 / JCM 1318 / BCRC 11384 / CCUG 27702 / LMG 3730 / NBRC 12168 / NCIMB 10025 / NRRL B-2784 / 534), this protein is Large ribosomal subunit protein bL9.